The primary structure comprises 404 residues: Ubiquitin-like modifier-activating enzyme 5 (404 aa).

ATP-binding residues include Gly83, Asp104, Lys127, Asn150, and Asn184. Residues Cys226 and Cys229 each coordinate Zn(2+). The active-site Glycyl thioester intermediate is the Cys250. Zn(2+) is bound by residues Cys303 and Cys308. A disordered region spans residues 372 to 393 (APEKSSETSEETVTAATADETS). The span at 382-391 (ETVTAATADE) shows a compositional bias: low complexity.

Belongs to the ubiquitin-activating E1 family. UBA5 subfamily.

Functionally, E1-like enzyme which activates UFM1. The protein is Ubiquitin-like modifier-activating enzyme 5 of Drosophila sechellia (Fruit fly).